Here is a 1380-residue protein sequence, read N- to C-terminus: Protein TORNADO 1 (1380 aa).

LRR repeat units lie at residues 26–46 (FFNL…CQLI), 47–70 (TESS…FIEL), 105–132 (TSKI…ILKR), 161–184 (NDSL…ELSR), 266–289 (NTTV…EFRW), 299–322 (EVKL…LFKN), 323–346 (KSLQ…LLCP), 348–371 (SRFS…GSNT), 446–472 (INPL…IYQK), and 476–502 (NGRK…SVRA). A Roc domain is found at 493–702 (PLTEPKSVRA…HHIRMTSKAI (210 aa)). Residues 506-513 (GQNYAGKT) and 567-571 (NLAGQ) contribute to the GTP site. A helical transmembrane segment spans residues 574 to 594 (FFALHDLMFPSPCFFLIVLSL). LRR repeat units lie at residues 640 to 665 (LTHS…RLRD), 688 to 712 (VSKL…VYQL), 799 to 826 (LTQL…ELEK), 1023 to 1046 (QSQF…TMYD), 1131 to 1154 (EAVL…IQGL), and 1229 to 1254 (QLGC…NFMK). 641 to 644 (THSE) contributes to the GTP binding site. A COR domain is found at 757–931 (NIQIVETRRH…LQVHLHNRIM (175 aa)). 2 consecutive transmembrane segments (helical) span residues 1255 to 1275 (LVTF…HMIP) and 1287 to 1307 (PAVM…AALG).

In terms of tissue distribution, expressed in seedlings, roots, leaves, stems and flowers. Present in ovules, prominently in nucellus and integuments.

It is found in the membrane. Functionally, involved in the basipetal transport of auxin (IAA) that modulates growth and organs organization. Required for initial divisions in the epidermal/lateral root cap leading to the formation of epidermal cells and a clone of lateral root cap cells, as well as for the maintenance of the radial pattern of cell specification in the root, thus regulating the distinction between the lateral root cap and epidermis. This is Protein TORNADO 1 (TRN1) from Arabidopsis thaliana (Mouse-ear cress).